The following is a 358-amino-acid chain: Alanine racemase (358 aa).

Catalysis depends on Lys34, which acts as the Proton acceptor; specific for D-alanine. Lys34 is subject to N6-(pyridoxal phosphate)lysine. Arg129 serves as a coordination point for substrate. Tyr254 functions as the Proton acceptor; specific for L-alanine in the catalytic mechanism. Residue Met302 coordinates substrate.

The protein belongs to the alanine racemase family. It depends on pyridoxal 5'-phosphate as a cofactor.

The enzyme catalyses L-alanine = D-alanine. It participates in amino-acid biosynthesis; D-alanine biosynthesis; D-alanine from L-alanine: step 1/1. Functionally, catalyzes the interconversion of L-alanine and D-alanine. May also act on other amino acids. The protein is Alanine racemase (alr) of Vibrio atlanticus (strain LGP32) (Vibrio splendidus (strain Mel32)).